A 303-amino-acid polypeptide reads, in one-letter code: Protein-lysine N-methyltransferase rrg1 (303 aa).

S-adenosyl-L-methionine contacts are provided by residues Trp117, 143-145 (GAG), Asp165, Trp198, and Ser221.

The protein belongs to the class I-like SAM-binding methyltransferase superfamily. METTL21 family.

The protein localises to the cytoplasm. It localises to the nucleus. S-adenosyl-L-methionine-dependent protein-lysine N-methyltransferase that methylates elongation factor 2 and elongation factor 3A. The polypeptide is Protein-lysine N-methyltransferase rrg1 (Schizosaccharomyces pombe (strain 972 / ATCC 24843) (Fission yeast)).